We begin with the raw amino-acid sequence, 224 residues long: UPF0758 protein VSAL_I0192 (224 aa).

Positions 102-224 constitute an MPN domain; that stretch reads ALTSPEHTKR…IVSFAERGWI (123 aa). His173, His175, and Asp186 together coordinate Zn(2+). Residues 173–186 carry the JAMM motif motif; that stretch reads HNHPSGVAEPSQAD.

The protein belongs to the UPF0758 family.

The chain is UPF0758 protein VSAL_I0192 from Aliivibrio salmonicida (strain LFI1238) (Vibrio salmonicida (strain LFI1238)).